The chain runs to 208 residues: Methylthioribulose-1-phosphate dehydratase (208 aa).

Zn(2+) contacts are provided by H99 and H101.

It belongs to the aldolase class II family. MtnB subfamily. Zn(2+) serves as cofactor.

The enzyme catalyses 5-(methylsulfanyl)-D-ribulose 1-phosphate = 5-methylsulfanyl-2,3-dioxopentyl phosphate + H2O. It functions in the pathway amino-acid biosynthesis; L-methionine biosynthesis via salvage pathway; L-methionine from S-methyl-5-thio-alpha-D-ribose 1-phosphate: step 2/6. In terms of biological role, catalyzes the dehydration of methylthioribulose-1-phosphate (MTRu-1-P) into 2,3-diketo-5-methylthiopentyl-1-phosphate (DK-MTP-1-P). The polypeptide is Methylthioribulose-1-phosphate dehydratase (Aquifex aeolicus (strain VF5)).